Here is a 384-residue protein sequence, read N- to C-terminus: Spermidine/putrescine import ATP-binding protein PotA (384 aa).

One can recognise an ABC transporter domain in the interval 6-238 (IAFQNVSKVF…PINHFVATFI (233 aa)). ATP is bound at residue 40 to 47 (GASGSGKS).

Belongs to the ABC transporter superfamily. Spermidine/putrescine importer (TC 3.A.1.11.1) family. In terms of assembly, the complex is composed of two ATP-binding proteins (PotA), two transmembrane proteins (PotB and PotC) and a solute-binding protein (PotD).

It localises to the cell membrane. The enzyme catalyses ATP + H2O + polyamine-[polyamine-binding protein]Side 1 = ADP + phosphate + polyamineSide 2 + [polyamine-binding protein]Side 1.. Functionally, part of the ABC transporter complex PotABCD involved in spermidine/putrescine import. Responsible for energy coupling to the transport system. This chain is Spermidine/putrescine import ATP-binding protein PotA, found in Streptococcus thermophilus (strain ATCC BAA-250 / LMG 18311).